The chain runs to 141 residues: Hemoglobin subunit alpha-D (141 aa).

The region spanning 1 to 141 (MLTAEDKKLI…VAAVLAEKYR (141 aa)) is the Globin domain. Heme b-binding residues include His-58 and His-87.

In terms of assembly, heterotetramer of two alpha-D chains and two beta chains. Red blood cells.

In terms of biological role, involved in oxygen transport from the lung to the various peripheral tissues. The protein is Hemoglobin subunit alpha-D (HBAD) of Aythya fuligula (Tufted duck).